The chain runs to 563 residues: Rab escort protein 1 (563 aa).

The segment at 538–563 (ELFKEETSPAENTTEEENDGGVEIED) is disordered. Residues 550–563 (TTEEENDGGVEIED) are compositionally biased toward acidic residues.

It belongs to the Rab GDI family. As to quaternary structure, heterotrimer composed of the alpha subunit RGTA, the beta subunit RGTB and REP; within this trimer, RGTA and RGTB form the catalytic component, while REP mediates peptide substrate binding. Expressed in roots, leaves and flowers.

The protein resides in the cytoplasm. Substrate-binding subunit of the Rab geranylgeranyltransferase (GGTase) complex. Binds unprenylated Rab proteins and presents the substrate peptide to the catalytic component composed of the alpha subunit RGTA and the beta subunit RGTB. Preferentially binds the GDP-bound form of Rab and stimulates geranylgeranylation of various Rab GTPases in vitro. This Arabidopsis thaliana (Mouse-ear cress) protein is Rab escort protein 1.